A 273-amino-acid polypeptide reads, in one-letter code: HMP-PP phosphatase (273 aa).

Asp8 functions as the Nucleophile in the catalytic mechanism. Positions 8, 10, and 212 each coordinate Mg(2+).

It belongs to the HAD-like hydrolase superfamily. Cof family. Mg(2+) is required as a cofactor.

It catalyses the reaction 4-amino-2-methyl-5-(diphosphooxymethyl)pyrimidine + H2O = 4-amino-2-methyl-5-(phosphooxymethyl)pyrimidine + phosphate + H(+). In terms of biological role, catalyzes the hydrolysis of 4-amino-2-methyl-5-hydroxymethylpyrimidine pyrophosphate (HMP-PP) to 4-amino-2-methyl-5-hydroxymethylpyrimidine phosphate (HMP-P). This Yersinia enterocolitica serotype O:8 / biotype 1B (strain NCTC 13174 / 8081) protein is HMP-PP phosphatase.